A 94-amino-acid chain; its full sequence is MAHHSLNTFYIWHNNVLHTHLVFFLPHLLNQPFSRGSFLIWLLLCWNSWYHLRTLRRQANQANKLSMMLLRVKQSPGTKLCHGDSELTSGLLAT.

This is an uncharacterized protein from Homo sapiens (Human).